Consider the following 445-residue polypeptide: Argininosuccinate synthase (445 aa).

ATP contacts are provided by residues 17 to 25 and A43; that span reads AFSGGLDTS. L-citrulline is bound at residue Y99. Residues G129 and T131 each contribute to the ATP site. The L-aspartate site is built by T131, N135, and D136. N135 contributes to the L-citrulline binding site. D136 contributes to the ATP binding site. R139 and S192 together coordinate L-citrulline. D194 contributes to the ATP binding site. 3 residues coordinate L-citrulline: T201, E203, and E280.

Belongs to the argininosuccinate synthase family. Type 2 subfamily. As to quaternary structure, homotetramer.

Its subcellular location is the cytoplasm. It catalyses the reaction L-citrulline + L-aspartate + ATP = 2-(N(omega)-L-arginino)succinate + AMP + diphosphate + H(+). The protein operates within amino-acid biosynthesis; L-arginine biosynthesis; L-arginine from L-ornithine and carbamoyl phosphate: step 2/3. This chain is Argininosuccinate synthase, found in Ralstonia pickettii (strain 12J).